A 477-amino-acid chain; its full sequence is PTS system glucose-specific EIICB component (477 aa).

The Cytoplasmic segment spans residues Met-1–Lys-14. The PTS EIIC type-1 domain maps to Met-1–Asp-388. A helical membrane pass occupies residues Ser-15 to Ala-35. Residues Asn-36–Glu-50 are Periplasmic-facing. A helical membrane pass occupies residues Ala-51–Phe-71. Residues Thr-72–Ala-79 are Cytoplasmic-facing. Residues Leu-80 to Val-100 form a helical membrane-spanning segment. The Periplasmic portion of the chain corresponds to Leu-101 to Lys-111. Residues His-112 to Phe-132 form a helical membrane-spanning segment. Residues Asn-133–Arg-151 lie on the Cytoplasmic side of the membrane. A helical membrane pass occupies residues Phe-152–Trp-172. At Pro-173–Asn-190 the chain is on the periplasmic side. Residues Pro-191–His-211 traverse the membrane as a helical segment. Over His-212 to Gly-248 the chain is Cytoplasmic. Residues Met-249–Trp-269 traverse the membrane as a helical segment. At His-270 to Lys-279 the chain is on the periplasmic side. A helical membrane pass occupies residues Val-280–Ile-300. The Cytoplasmic segment spans residues Glu-301–Pro-309. A helical transmembrane segment spans residues Ile-310–Gly-330. The Periplasmic segment spans residues Met-331–Trp-355. The helical transmembrane segment at Leu-356–Ile-376 threads the bilayer. Residues Lys-377–Ser-477 are Cytoplasmic-facing. One can recognise a PTS EIIB type-1 domain in the interval Ser-399 to Ser-477. The active-site Phosphocysteine intermediate; for EIIB activity is the Cys-421. Residue Cys-421 is modified to Phosphocysteine.

Its subcellular location is the cell inner membrane. It catalyses the reaction N(pros)-phospho-L-histidyl-[protein] + D-glucose(out) = D-glucose 6-phosphate(in) + L-histidyl-[protein]. Its function is as follows. The phosphoenolpyruvate-dependent sugar phosphotransferase system (sugar PTS), a major carbohydrate active transport system, catalyzes the phosphorylation of incoming sugar substrates concomitantly with their translocation across the cell membrane. The enzyme II complex composed of PtsG and Crr is involved in glucose transport. Also functions as a chemoreceptor monitoring the environment for changes in sugar concentration. It can also phosphorylate mannose, methyl alpha-glucoside and 2-deoxy-glucose. In Salmonella typhimurium (strain LT2 / SGSC1412 / ATCC 700720), this protein is PTS system glucose-specific EIICB component (ptsG).